The chain runs to 195 residues: Imidazoleglycerol-phosphate dehydratase (195 aa).

Belongs to the imidazoleglycerol-phosphate dehydratase family.

The protein resides in the cytoplasm. It carries out the reaction D-erythro-1-(imidazol-4-yl)glycerol 3-phosphate = 3-(imidazol-4-yl)-2-oxopropyl phosphate + H2O. Its pathway is amino-acid biosynthesis; L-histidine biosynthesis; L-histidine from 5-phospho-alpha-D-ribose 1-diphosphate: step 6/9. The sequence is that of Imidazoleglycerol-phosphate dehydratase from Thermotoga petrophila (strain ATCC BAA-488 / DSM 13995 / JCM 10881 / RKU-1).